A 1591-amino-acid chain; its full sequence is MGNAESQHVEHEFYGEKHASLGRKHTSRSLRLSHKTRRTRHASSGKVIHRNSEVSTRSSSTPSIPQSLAENGLEPFSQDGTLEDFGSPIWVDRVDMGLRPVSYTDSSVTPSVDSSIVLTAASVQSMPDTEESRLYGDDATYLAEGGRRQHSYTSNGPTFMETASFKKKRSKSADIWREDSLEFSLSDLSQEHLTSNEEILGSAEEKDCEEARGMETRASPRQLSTCQRANSLGDLYAQKNSGVTANGGPGSKFAGYCRNLVSDIPNLANHKMPPAAAEETPPYSNYNTLPCRKSHCLSEGATNPQISHSNSMQGRRAKTTQDVNAGEGSEFADSGIEGATTDTDLLSRRSNATNSSYSPTTGRAFVGSDSGSSSTGDAARQGVYENFRRELEMSTTNSESLEEAGSAHSDEQSSGTLSSPGQSDILLTAAQGTVRKAGALAVKNFLVHKKNKKVESATRRKWKHYWVSLKGCTLFFYESDGRSGIDHNSIPKHAVWVENSIVQAVPEHPKKDFVFCLSNSLGDAFLFQTTSQTELENWITAIHSACATAVARHHHKEDTLRLLKSEIKKLEQKIDMDEKMKKMGEMQLSSVTDSKKKKTILDQIFVWEQNLEQFQMDLFRFRCYLASLQGGELPNPKRLLAFASRPTKVAMGRLGIFSVSSFHALVAARTGETGVRRRTQAMSRSASKRRSRFSSLWGLDTTSKKKQGRPSINQVFGEGTEAVKKSLEGIFDDIVPDGKREKEVVLPNVHQHNPDCDIWVHEYFTPSWFCLPNNQPALTVVRPGDTARDTLELICKTHQLDHSAHYLRLKFLIENKMQLYVPQPEEDIYELLYKEIEICPKVTQSIHIEKSDTAADTYGFSLSSVEEDGIRRLYVNSVKETGLASKKGLKAGDEILEINNRAADALNSSMLKDFLSQPSLGLLVRTYPELEEGVELLESPPHRVDGPADLGESPLAFLTSNPGHSLCSEQGSSAETAPEETEGPDLESSDETDHSSKSTEQVAAFCRSLHEMNPSDQSPSPQDSTGPQLATMRQLSDADKLRKVICELLETERTYVKDLNCLMERYLKPLQKETFLTQDELDVLFGNLTEMVEFQVEFLKTLEDGVRLVPDLEKLEKVDQFKKVLFSLGGSFLYYADRFKLYSAFCASHTKVPKVLVKAKTDTAFKAFLDAQNPKQQHSSTLESYLIKPIQRILKYPLLLRELFALTDAESEEHYHLDVAIKTMNKVASHINEMQKIHEEFGAVFDQLIAEQTGEKKEVADLSMGDLLLHTTVIWLNPPASLGKWKKEPELAAFVFKTAVVLVYKDGSKQKKKLVGSHRLSIYEDWDPFRFRHMIPTEALQVRALASADAEANAVCEIVHVKSESEGRPERVFHLCCSSPESRKDFLKAVHSILRDKHRRQLLKTESLPSSQQYVPFGGKRLCALKGARPAMSRAVSAPSKSLGRRRRRLARNRFTIDSDAVSASSPEKESQQPPGGGDTDRWVEEQFDLAQYEEQDDIKETDILSDDDEFCESVKGASVDRDLQERLQATSISQRERGRKTLDSHASRMAQLKKQAALSGINGGLESASEEVIWVRREDFAPSRKLNTEI.

The disordered stretch occupies residues 1 to 78; it reads MGNAESQHVE…AENGLEPFSQ (78 aa). Residue G2 is the site of N-myristoyl glycine attachment. The span at 7-19 shows a compositional bias: basic and acidic residues; the sequence is QHVEHEFYGEKHA. Residues 20 to 49 are compositionally biased toward basic residues; it reads SLGRKHTSRSLRLSHKTRRTRHASSGKVIH. Low complexity predominate over residues 53-67; that stretch reads EVSTRSSSTPSIPQS. A Phosphoserine modification is found at S231. Disordered regions lie at residues 298-379 and 393-422; these read SEGA…GDAA and MSTTNSESLEEAGSAHSDEQSSGTLSSPGQ. Composition is skewed to polar residues over residues 300–313 and 340–361; these read GATNPQISHSNSMQ and TTDTDLLSRRSNATNSSYSPTT. A phosphoserine mark is found at S356 and S358. The segment covering 367–377 has biased composition (low complexity); it reads GSDSGSSSTGD. Polar residues predominate over residues 412 to 422; the sequence is QSSGTLSSPGQ. Residues 434–549 form the PH 1 domain; that stretch reads VRKAGALAVK…TAIHSACATA (116 aa). A Phosphoserine modification is found at S695. The region spanning 765–832 is the RBD domain; sequence TPSWFCLPNN…QPEEDIYELL (68 aa). Y829 bears the Phosphotyrosine; by NTRK2 mark. Residues 845-908 enclose the PDZ domain; sequence SIHIEKSDTA…NNRAADALNS (64 aa). A disordered region spans residues 939 to 1034; that stretch reads SPPHRVDGPA…TGPQLATMRQ (96 aa). Positions 958-975 are enriched in polar residues; that stretch reads LTSNPGHSLCSEQGSSAE. Over residues 977–990 the composition is skewed to acidic residues; the sequence is APEETEGPDLESSD. Over residues 1014 to 1024 the composition is skewed to low complexity; the sequence is PSDQSPSPQDS. The segment covering 1025-1034 has biased composition (polar residues); it reads TGPQLATMRQ. Residues 1040–1234 enclose the DH domain; it reads KLRKVICELL…NKVASHINEM (195 aa). Residues 1261–1397 form the PH 2 domain; sequence DLSMGDLLLH…KAVHSILRDK (137 aa). Position 1323 is a phosphotyrosine (Y1323). Glycyl lysine isopeptide (Lys-Gly) (interchain with G-Cter in ubiquitin) cross-links involve residues K1404 and K1420. The segment at 1456 to 1482 is disordered; that stretch reads TIDSDAVSASSPEKESQQPPGGGDTDR. Position 1519 is a phosphoserine (S1519).

Belongs to the TIAM family. As to quaternary structure, component of the Par polarity complex, composed of at least phosphorylated PRKCZ, PARD3 and TIAM1. Interacts with NTRK2; mediates the activation of RAC1 by BDNF. Interacts with MAPK8IP2 and CD44. Interacts with BAIAP2. Interacts with EPHA8; regulates clathrin-mediated endocytosis of EPHA8. Interacts with PARD3. Interacts (via PDZ domain) with CNTNAP4, SDC1 and SDC3 (via C-terminus). In terms of processing, ubiquitinated. Undergoes 'Lys-48' ubiquitination at Lys-1404 and Lys-1420 by a CUL3(KBTBD6/7) E3 ubiquitin ligase complex composed of CUL3, RBX1, KBTBD6 and KBTBD7. 'Lys-48' ubiquitination at Lys-1404 and Lys-1420 triggers proteasomal degradation. Ubiquitination at Lys-1404 and Lys-1420 by CUL3(KBTBD6/7) also requires the membrane-associated protein GABARAP and may therefore be spatially restricted within the cell. As to expression, found in virtually all analyzed tumor cell lines including B- and T-lymphomas, neuroblastomas, melanomas and carcinomas.

The protein localises to the cell junction. It is found in the cell membrane. In terms of biological role, guanyl-nucleotide exchange factor that activates RHO-like proteins and connects extracellular signals to cytoskeletal activities. Activates RAC1, CDC42, and to a lesser extent RHOA and their downstream signaling to regulate processes like cell adhesion and cell migration. The polypeptide is Rho guanine nucleotide exchange factor TIAM1 (Homo sapiens (Human)).